Consider the following 232-residue polypeptide: Chromosome partition protein MukE (232 aa).

Residues 203 to 232 form a disordered region; it reads HTKEPSQGSLLSEEDQEEQAQEEMTEEGEA. A compositionally biased stretch (acidic residues) spans 214-232; that stretch reads SEEDQEEQAQEEMTEEGEA.

The protein belongs to the MukE family. As to quaternary structure, interacts, and probably forms a ternary complex, with MukF and MukB. The complex formation is stimulated by calcium or magnesium.

Its subcellular location is the cytoplasm. It is found in the nucleoid. Functionally, involved in chromosome condensation, segregation and cell cycle progression. May participate in facilitating chromosome segregation by condensation DNA from both sides of a centrally located replisome during cell division. Probably acts via its interaction with MukB and MukF. The sequence is that of Chromosome partition protein MukE from Vibrio parahaemolyticus serotype O3:K6 (strain RIMD 2210633).